The sequence spans 137 residues: Cellular retinoic acid-binding protein 1 (137 aa).

Residues 21-31 (RALGVNAMLRK) carry the Nuclear localization signal motif. 132–134 (RIY) contributes to the all-trans-retinoate binding site.

Belongs to the calycin superfamily. Fatty-acid binding protein (FABP) family.

Its subcellular location is the cytoplasm. In terms of biological role, cytosolic CRABPs may regulate the access of retinoic acid to the nuclear retinoic acid receptors. This is Cellular retinoic acid-binding protein 1 (CRABP1) from Pelodiscus sinensis (Chinese softshell turtle).